The primary structure comprises 320 residues: Ferrochelatase (320 aa).

Residues His-194 and Glu-275 each coordinate Fe cation.

Belongs to the ferrochelatase family.

The protein localises to the cytoplasm. The enzyme catalyses heme b + 2 H(+) = protoporphyrin IX + Fe(2+). It functions in the pathway porphyrin-containing compound metabolism; protoheme biosynthesis; protoheme from protoporphyrin-IX: step 1/1. Functionally, catalyzes the ferrous insertion into protoporphyrin IX. This Pectobacterium atrosepticum (strain SCRI 1043 / ATCC BAA-672) (Erwinia carotovora subsp. atroseptica) protein is Ferrochelatase.